The following is a 191-amino-acid chain: Putative inactive glutathione hydrolase 4 (191 aa).

Thr54 functions as the Nucleophile in the catalytic mechanism. Residues Thr72, Asn74, Glu93, Asp96, Ser126–Ser127, and Gly147–Gly148 contribute to the L-glutamate site.

This sequence belongs to the gamma-glutamyltransferase family. In terms of tissue distribution, expressed at low levels in embryo, roots and leaves. In mature plants, expression is restricted to vascular tissues of roots, leaves, flowers and siliques.

The protein is Putative inactive glutathione hydrolase 4 (GGT4) of Arabidopsis thaliana (Mouse-ear cress).